The sequence spans 988 residues: Protein argonaute 10 (988 aa).

Residues 1–11 (MPIRQMKDSSE) are compositionally biased toward basic and acidic residues. The disordered stretch occupies residues 1–103 (MPIRQMKDSS…PPSQTTSSAV (103 aa)). The span at 41-57 (PVTVTTPATVTQSQASS) shows a compositional bias: low complexity. Basic residues predominate over residues 64–73 (NRSRRRNRGG). Residues 338-451 (PVIEFVAQLL…LPMEACKIVE (114 aa)) form the PAZ domain. In terms of domain architecture, Piwi spans 625–946 (LLLAILPDNN…AAFRARFYLE (322 aa)).

Belongs to the argonaute family. Ago subfamily. In terms of assembly, interacts with GATA18/HAN and KNAT1/BP. Interacts with RICE1 and RICE2 that act as cofactors. As to expression, expressed in roots, stems, leaves, developing embryo, siliques, inflorescences, provascular tissue, shoot apical meristem (SAM) and adaxial (upper) sides of lateral organ primordia. Observed in the floral meristem, the adaxial side of sepal primordia, and the provascular tissue.

It is found in the cytoplasm. In terms of biological role, involved in RNA-mediated post-transcriptional gene silencing (PTGS). Main component of the RNA-induced silencing complex (RISC) that binds to a short guide RNA such as a microRNA (miRNA) or small interfering RNA (siRNA). RISC uses the mature miRNA or siRNA as a guide for slicer-directed cleavage of homologous mRNAs to repress gene expression. Required for reliable formation of primary and axillary shoot apical meristems. Specifies leaf adaxial identity by repressing the miR165 and miR166 microRNAs in the embryonic shoot apex, in the shoot apical meristem (SAM) and leaf. Represses the microRNA miR398 which targets CCS1 chaperone mRNAs for translational inhibition. Acts as a negative regulator of AGO1 protein level. Like AGO1, is required for stem cell function and organ polarity. Unlike AGO1, is not subjected to small RNA-mediated repression itself. Essential for multiple processes in development. Coregulates, with GATA18/HAN, the shoot apical meristem (SAM) organization. In Arabidopsis thaliana (Mouse-ear cress), this protein is Protein argonaute 10.